A 319-amino-acid polypeptide reads, in one-letter code: Acetyl-coenzyme A carboxylase carboxyl transferase subunit alpha (319 aa).

A CoA carboxyltransferase C-terminal domain is found at 35-296 (NLDEEVQRLR…KAQLLDDLSE (262 aa)).

This sequence belongs to the AccA family. As to quaternary structure, acetyl-CoA carboxylase is a heterohexamer composed of biotin carboxyl carrier protein (AccB), biotin carboxylase (AccC) and two subunits each of ACCase subunit alpha (AccA) and ACCase subunit beta (AccD).

It localises to the cytoplasm. It catalyses the reaction N(6)-carboxybiotinyl-L-lysyl-[protein] + acetyl-CoA = N(6)-biotinyl-L-lysyl-[protein] + malonyl-CoA. Its pathway is lipid metabolism; malonyl-CoA biosynthesis; malonyl-CoA from acetyl-CoA: step 1/1. Its function is as follows. Component of the acetyl coenzyme A carboxylase (ACC) complex. First, biotin carboxylase catalyzes the carboxylation of biotin on its carrier protein (BCCP) and then the CO(2) group is transferred by the carboxyltransferase to acetyl-CoA to form malonyl-CoA. In Sodalis glossinidius (strain morsitans), this protein is Acetyl-coenzyme A carboxylase carboxyl transferase subunit alpha.